A 540-amino-acid polypeptide reads, in one-letter code: NADH-quinone oxidoreductase subunit N 1 (540 aa).

The next 13 helical transmembrane spans lie at 11–31, 52–72, 109–129, 142–162, 195–215, 250–270, 284–306, 324–344, 352–372, 386–406, 431–451, 464–486, and 508–528; these read ILPELMLLLLGLLVLGSDVLT, AVGLGLVFIVGLVQSRFLFTV, FTMIARLTFIGAAFLTTLLAM, ALLIFSTLGMSIMAAATEFIL, FLFGSLSSAIFLYGISLTYGF, LILGMLFIIAGLGYKISVVPF, PVTAFLSTASKAAGFLLLYRLLT, WTSILAILALVTVIVGNLAAL, LLAYSSIGHAGFLLLAVLLWA, LIYYLIVYSLTNLGSFGVLAV, LMMTILILSLAGIPPLAGFWA, AVPLVTIAVIMTVVSLYYYLRFL, and AAIILSTVLVVLLGLLPNLIW.

It belongs to the complex I subunit 2 family. In terms of assembly, NDH-1 is composed of 14 different subunits. Subunits NuoA, H, J, K, L, M, N constitute the membrane sector of the complex.

It is found in the cell membrane. It catalyses the reaction a quinone + NADH + 5 H(+)(in) = a quinol + NAD(+) + 4 H(+)(out). In terms of biological role, NDH-1 shuttles electrons from NADH, via FMN and iron-sulfur (Fe-S) centers, to quinones in the respiratory chain. The immediate electron acceptor for the enzyme in this species is believed to be ubiquinone. Couples the redox reaction to proton translocation (for every two electrons transferred, four hydrogen ions are translocated across the cytoplasmic membrane), and thus conserves the redox energy in a proton gradient. This chain is NADH-quinone oxidoreductase subunit N 1, found in Roseiflexus castenholzii (strain DSM 13941 / HLO8).